The following is a 339-amino-acid chain: Protein pelota homolog (339 aa).

It belongs to the eukaryotic release factor 1 family. Pelota subfamily. As to quaternary structure, monomer. Requires a divalent metal cation as cofactor.

It localises to the cytoplasm. Its function is as follows. May function in recognizing stalled ribosomes, interact with stem-loop structures in stalled mRNA molecules, and effect endonucleolytic cleavage of the mRNA. May play a role in the release non-functional ribosomes and degradation of damaged mRNAs. Has endoribonuclease activity. The sequence is that of Protein pelota homolog (pelA) from Thermoplasma acidophilum (strain ATCC 25905 / DSM 1728 / JCM 9062 / NBRC 15155 / AMRC-C165).